We begin with the raw amino-acid sequence, 197 residues long: Recombination protein RecR (197 aa).

The C4-type zinc-finger motif lies at 55–70 (CVQCRDFTESEICTIC). Residues 78–173 (QQLCVVESPA…RPSRLAQGMP (96 aa)) enclose the Toprim domain.

Belongs to the RecR family.

Functionally, may play a role in DNA repair. It seems to be involved in an RecBC-independent recombinational process of DNA repair. It may act with RecF and RecO. The chain is Recombination protein RecR from Xanthomonas oryzae pv. oryzae (strain MAFF 311018).